The following is a 270-amino-acid chain: Proteasome subunit beta (270 aa).

Residues 1 to 47 (MSNRGRLGDAFLRPGSSSFLDFLSDHAPELLPGRSAAAGNAPLAPHA) constitute a propeptide, removed in mature form; by autocatalysis. Residue threonine 48 is the Nucleophile of the active site.

It belongs to the peptidase T1B family. As to quaternary structure, the 20S proteasome core is composed of 14 alpha and 14 beta subunits that assemble into four stacked heptameric rings, resulting in a barrel-shaped structure. The two inner rings, each composed of seven catalytic beta subunits, are sandwiched by two outer rings, each composed of seven alpha subunits. The catalytic chamber with the active sites is on the inside of the barrel. Has a gated structure, the ends of the cylinder being occluded by the N-termini of the alpha-subunits. Is capped by the proteasome-associated ATPase, ARC.

The protein localises to the cytoplasm. The catalysed reaction is Cleavage of peptide bonds with very broad specificity.. Its pathway is protein degradation; proteasomal Pup-dependent pathway. Its activity is regulated as follows. The formation of the proteasomal ATPase ARC-20S proteasome complex, likely via the docking of the C-termini of ARC into the intersubunit pockets in the alpha-rings, may trigger opening of the gate for substrate entry. Interconversion between the open-gate and close-gate conformations leads to a dynamic regulation of the 20S proteasome proteolysis activity. In terms of biological role, component of the proteasome core, a large protease complex with broad specificity involved in protein degradation. The sequence is that of Proteasome subunit beta from Xylanimonas cellulosilytica (strain DSM 15894 / JCM 12276 / CECT 5975 / KCTC 9989 / LMG 20990 / NBRC 107835 / XIL07).